A 248-amino-acid polypeptide reads, in one-letter code: Pulmonary surfactant-associated protein A (248 aa).

An N-terminal signal peptide occupies residues 1–17 (MLLCSLTLMLLWMVASG). Residues 28 to 100 (GSPGIPGTPG…PGERGPPGFP (73 aa)) enclose the Collagen-like domain. The disordered stretch occupies residues 29–103 (SPGIPGTPGS…RGPPGFPAYL (75 aa)). Positions 42–51 (PGRDGRDGIK) are enriched in basic and acidic residues. The span at 54 to 65 (PGPPGPMGPPGG) shows a compositional bias: pro residues. A compositionally biased stretch (low complexity) spans 69 to 82 (LPGRDGMTGAPGLP). Over residues 84–93 (ERGEKGEPGE) the composition is skewed to basic and acidic residues. The C-type lectin domain maps to 127–247 (LQGSMLEVGE…CLQYRLAICE (121 aa)). 2 disulfides stabilise this stretch: C155–C246 and C224–C238. Residue N207 is glycosylated (N-linked (GlcNAc...) asparagine). Ca(2+) contacts are provided by E215, R217, N234, and D235.

It belongs to the SFTPA family. As to quaternary structure, oligomeric complex of 6 set of homotrimers.

It is found in the secreted. It localises to the extracellular space. The protein resides in the extracellular matrix. Its subcellular location is the surface film. In terms of biological role, in presence of calcium ions, it binds to surfactant phospholipids and contributes to lower the surface tension at the air-liquid interface in the alveoli of the mammalian lung and is essential for normal respiration. Enhances the expression of MYO18A/SP-R210 on alveolar macrophages. This Ovis aries (Sheep) protein is Pulmonary surfactant-associated protein A (SFTPA1).